The chain runs to 118 residues: Large ribosomal subunit protein bL20 (118 aa).

This sequence belongs to the bacterial ribosomal protein bL20 family.

Binds directly to 23S ribosomal RNA and is necessary for the in vitro assembly process of the 50S ribosomal subunit. It is not involved in the protein synthesizing functions of that subunit. This chain is Large ribosomal subunit protein bL20, found in Bacillus anthracis (strain CDC 684 / NRRL 3495).